The following is a 140-amino-acid chain: Large ribosomal subunit protein uL14 (140 aa).

The protein belongs to the universal ribosomal protein uL14 family. As to quaternary structure, component of the large ribosomal subunit.

The protein localises to the cytoplasm. Its function is as follows. Component of the large ribosomal subunit. The ribosome is a large ribonucleoprotein complex responsible for the synthesis of proteins in the cell. The sequence is that of Large ribosomal subunit protein uL14 (rpl23) from Ictalurus punctatus (Channel catfish).